The following is a 333-amino-acid chain: L-lactate dehydrogenase B chain (333 aa).

NAD(+)-binding positions include 29-57 (GQVG…LEDK) and arginine 99. Arginine 106, asparagine 138, and arginine 169 together coordinate substrate. NAD(+) is bound at residue asparagine 138. Histidine 193 (proton acceptor) is an active-site residue. Threonine 248 serves as a coordination point for substrate.

This sequence belongs to the LDH/MDH superfamily. LDH family. As to quaternary structure, homotetramer.

Its subcellular location is the cytoplasm. The catalysed reaction is (S)-lactate + NAD(+) = pyruvate + NADH + H(+). The protein operates within fermentation; pyruvate fermentation to lactate; (S)-lactate from pyruvate: step 1/1. In terms of biological role, interconverts simultaneously and stereospecifically pyruvate and lactate with concomitant interconversion of NADH and NAD(+). The polypeptide is L-lactate dehydrogenase B chain (LDHB) (Sceloporus woodi (Florida scrub lizard)).